Consider the following 443-residue polypeptide: MSHSAEPLPMTARRSGPLTGEAQVPGDKSISHRALILGALSVGETHITGLLEGQDVLDTAAAMRAFGAQVERLGEGEWRVNGVGVGGFAEPEGVIDCGNSGTGVRLIMGAMATTPITATFTGDASLSRRPMGRVTDPLELFGCEVTAREGKRLPLTIKGASEPVPVRYKTPVASAQIKSAVLLAGLNAPGETVVIEAEPTRDHTERMLAGFGAAITTETTAEGHVIILKGRPELKPQPVAVPRDPSSAAFPVAAALIVPGSEIRVPGVSRNPTRDGLYVTLLEMGADIRFENQREEGGEPVADLVVRHGPLKGVTVPAERAASMIDEFPILSVIACFAEGTTVMQGVHELRVKESDRIDAMAVGLRANGAEVVDTQDTMTVHGKGGLDGGATCATHLDHRIAMSFLVAGLASHQPISVDDGGPIATSFPDFLPLMRGLGAQID.

Residues 1-25 (MSHSAEPLPMTARRSGPLTGEAQVP) form a disordered region. 3-phosphoshikimate contacts are provided by K28, S29, and R33. K28 contributes to the phosphoenolpyruvate binding site. Phosphoenolpyruvate is bound by residues G101 and R129. Residues S174, Q176, D326, and K353 each coordinate 3-phosphoshikimate. Position 176 (Q176) interacts with phosphoenolpyruvate. D326 serves as the catalytic Proton acceptor. Residues R357 and R400 each coordinate phosphoenolpyruvate.

It belongs to the EPSP synthase family. Monomer.

Its subcellular location is the cytoplasm. The enzyme catalyses 3-phosphoshikimate + phosphoenolpyruvate = 5-O-(1-carboxyvinyl)-3-phosphoshikimate + phosphate. It functions in the pathway metabolic intermediate biosynthesis; chorismate biosynthesis; chorismate from D-erythrose 4-phosphate and phosphoenolpyruvate: step 6/7. Catalyzes the transfer of the enolpyruvyl moiety of phosphoenolpyruvate (PEP) to the 5-hydroxyl of shikimate-3-phosphate (S3P) to produce enolpyruvyl shikimate-3-phosphate and inorganic phosphate. The chain is 3-phosphoshikimate 1-carboxyvinyltransferase from Paracoccus denitrificans (strain Pd 1222).